The sequence spans 82 residues: Putative Fe(2+) transport protein A (82 aa).

This sequence belongs to the FeoA family.

Its function is as follows. Might be involved in Fe(2+) ion uptake. The polypeptide is Putative Fe(2+) transport protein A (Leptolyngbya boryana (Plectonema boryanum)).